A 451-amino-acid polypeptide reads, in one-letter code: L,D-transpeptidase 5 (451 aa).

The L,D-TPase catalytic domain occupies 263-384 (QVVKAEVSSH…AVYGDPVEVT (122 aa)). Substrate contacts are provided by residues Tyr-323 and 337–338 (NG). His-342 functions as the Proton donor/acceptor in the catalytic mechanism. Cys-360 serves as the catalytic Nucleophile. Asn-362 provides a ligand contact to substrate. The segment at 417–451 (AAKPAATQIPVTAPVTPSDAPTPSGTPTTTNGPGG) is disordered. Residues 437–451 (PTPSGTPTTTNGPGG) show a composition bias toward low complexity.

The protein operates within cell wall biogenesis; peptidoglycan biosynthesis. Its activity is regulated as follows. In contrast to other LDT paralogs, LdtMt5 is not inactivated by the beta-lactam carbapenems; beta-lactam carbapenems form covalent adducts with other LDT paralogs but the formation of covalent adducts was not detected for LdtMt5. In terms of biological role, generates 3-&gt;3 cross-links in peptidoglycan, catalyzing the cleavage of the mDap(3)-D-Ala(4) bond of a tetrapeptide donor stem and the formation of a bond between the carbonyl of mDap(3) of the donor stem and the side chain of mDap(3) of the acceptor stem. Is specific for donor substrates containing a stem tetrapeptide since it cannot use pentapeptide stems. The polypeptide is L,D-transpeptidase 5 (lprQ) (Mycobacterium tuberculosis (strain ATCC 25618 / H37Rv)).